The chain runs to 263 residues: MGQKVNSNGLRFGINKNWQSRWVAKTNQQTGDWIVQDEKIRNYLFKKFHSAFISNVDIERTQTSIRVFIYASQPGIILGKEAANIKVILLAINKIVGRHIKVDVDVLEVGNPSLSAKIVARELADAIENRTPLRTAMRQALKRVLKAGAKGIKVLVSGRLNGVEIARDKMYIEGNVTLSTLRTDIDYALEEAQMSYGVIGVKVWINRGEIFGKDFYKKQAHIVKPKGSEANHQRRNSNKSKDYRDNKNKQFNKNHQNQQPAKE.

Residues Ile-40 to Glu-108 form the KH type-2 domain. The disordered stretch occupies residues Lys-224 to Glu-263. Over residues Lys-239–Asn-248 the composition is skewed to basic and acidic residues. A compositionally biased stretch (low complexity) spans Lys-249–Glu-263.

It belongs to the universal ribosomal protein uS3 family. Part of the 30S ribosomal subunit. Forms a tight complex with proteins S10 and S14.

Its function is as follows. Binds the lower part of the 30S subunit head. Binds mRNA in the 70S ribosome, positioning it for translation. This Mycoplasmoides gallisepticum (strain R(low / passage 15 / clone 2)) (Mycoplasma gallisepticum) protein is Small ribosomal subunit protein uS3.